A 742-amino-acid polypeptide reads, in one-letter code: 2'-5'-oligoadenylate synthase 2 (742 aa).

Positions 1–35 (MGNWLTGNWSSDRSSGYSSGWSPGGSSGVPSGPVH) are disordered. Gly2 carries the N-myristoyl glycine lipid modification. Over residues 10–21 (SSDRSSGYSSGW) the composition is skewed to low complexity. 2 OAS domain regions span residues 60-374 (VPSQ…YWDV) and 382-721 (TPSH…WKVP). N6-acetyllysine is present on Lys417. Position 436 (Ser436) interacts with ATP. Asp448, Asp450, and Asp519 together coordinate Mg(2+). Positions 582 and 585 each coordinate ATP.

Belongs to the 2-5A synthase family. Homodimer. It depends on Mg(2+) as a cofactor. Myristoylation is not essential for its activity. Post-translationally, glycosylated. Glycosylation is essential for its activity. As to expression, expressed in the uterus. Expressed in mammary glands: expressed at low level before the establishment of lactation, then expression strongly increases, and subsequently decreases during early involution.

The protein localises to the cytoplasm. It localises to the perinuclear region. The enzyme catalyses 3 ATP = 5'-triphosphoadenylyl-(2'-&gt;5')-adenylyl-(2'-&gt;5')-adenosine + 2 diphosphate. Produced as a latent enzyme which is activated by double stranded RNA (dsRNA) generated during the course of viral infection. The dsRNA activator must be at least 15 nucleotides long, and no modification of the 2'-hydroxyl group is tolerated. ssRNA or dsDNA do not act as activators. Strongly inhibited by copper, iron and zinc ions. Partially inhibited by cobalt and nickel ions. Functionally, interferon-induced, dsRNA-activated antiviral enzyme which plays a critical role in cellular innate antiviral response. Activated by detection of double stranded RNA (dsRNA): polymerizes higher oligomers of 2'-5'-oligoadenylates (2-5A) from ATP which then bind to the inactive monomeric form of ribonuclease L (RNASEL) leading to its dimerization and subsequent activation. Activation of RNASEL leads to degradation of cellular as well as viral RNA, resulting in the inhibition of protein synthesis, thus terminating viral replication. Can mediate the antiviral effect via the classical RNASEL-dependent pathway or an alternative antiviral pathway independent of RNASEL. In addition, it may also play a role in other cellular processes such as apoptosis, cell growth, differentiation and gene regulation. May act as a negative regulator of lactation, stopping lactation in virally infected mammary gland lobules, thereby preventing transmission of viruses to neonates. Non-infected lobules would not be affected, allowing efficient pup feeding during infection. This is 2'-5'-oligoadenylate synthase 2 from Mus musculus (Mouse).